We begin with the raw amino-acid sequence, 69 residues long: Putative antitoxin AF_1481 (69 aa).

The protein belongs to the UPF0330 family.

Functionally, possibly the antitoxin component of a type II toxin-antitoxin (TA) system. The polypeptide is Putative antitoxin AF_1481 (Archaeoglobus fulgidus (strain ATCC 49558 / DSM 4304 / JCM 9628 / NBRC 100126 / VC-16)).